The following is a 712-amino-acid chain: MSQEKQVFSIDLAGRQLTVETGQLAKQANGAVLVRYGDTAVLSTATASKEAKNVDFFPLTVNYEERLYAVGKIPGGFIKREGRPSEKAILASRLIDRPIRPLFADGFRNEVQVVSIVMSVDQDCSSEMAAMLGSSLALSISDIPFEGPIAGATVGRINGEFVINPTVEQQEQSDIHLVVAGTKDAINMVEAGADQVPEETMLEAIMFGHDEIKRLIAFQEEIVQAVGKEKSEVKLYEVDADLNQAVREMAEKDMHSAIQVHEKHAREDAINEVKKRVIEHYEAEEADADTLGQVNEILYKIVKEEVRRLITVEKIRPDGRKGDEIRPLASEVGILSRTHGSGLFTRGQTQALSICTLGALGDVQILDGLGVEESKRFMHHYNFPSFSVGETRPMRGPGRREIGHGALGERALEPVIPSEKDFPYTVRLVSEVLESNGSTSQASICGSTLAMMDAGVPLKAPVAGIAMGLVKSGEHYTILSDIQGMEDHLGDMDFKVAGTAQGVTALQMDIKIDGLSREILEEALQQAKIGRVHILNHMLSVIAEPRTELSAYAPKIITMTINPDKIRDVIGPSGKQINKIIEETGVKIDIEQDGTVFISSINQEMNDKAKKIIEDIVREVQVGEIYEGKVKRVEKFGAFVELFSGKDGLVHISELALERVGKVEDVVKIGDVITVKVIEIDKQGRVNLSRKVLLKEEQEKEAAKEEDKQEQQ.

Mg(2+) contacts are provided by aspartate 487 and aspartate 493. The region spanning 554-613 is the KH domain; it reads PKIITMTINPDKIRDVIGPSGKQINKIIEETGVKIDIEQDGTVFISSINQEMNDKAKKII. In terms of domain architecture, S1 motif spans 623-691; the sequence is GEIYEGKVKR…KQGRVNLSRK (69 aa).

It belongs to the polyribonucleotide nucleotidyltransferase family. Mg(2+) serves as cofactor.

Its subcellular location is the cytoplasm. The enzyme catalyses RNA(n+1) + phosphate = RNA(n) + a ribonucleoside 5'-diphosphate. In terms of biological role, involved in mRNA degradation. Catalyzes the phosphorolysis of single-stranded polyribonucleotides processively in the 3'- to 5'-direction. The chain is Polyribonucleotide nucleotidyltransferase from Bacillus cereus (strain G9842).